Here is a 224-residue protein sequence, read N- to C-terminus: Ribose-5-phosphate isomerase A (224 aa).

Residues 32–35 (TGST), 85–88 (DGAD), and 98–101 (KGGG) each bind substrate. Residue glutamate 107 is the Proton acceptor of the active site. Lysine 125 lines the substrate pocket.

Belongs to the ribose 5-phosphate isomerase family. As to quaternary structure, homodimer.

It catalyses the reaction aldehydo-D-ribose 5-phosphate = D-ribulose 5-phosphate. Its pathway is carbohydrate degradation; pentose phosphate pathway; D-ribose 5-phosphate from D-ribulose 5-phosphate (non-oxidative stage): step 1/1. Functionally, catalyzes the reversible conversion of ribose-5-phosphate to ribulose 5-phosphate. This Pseudomonas putida (strain W619) protein is Ribose-5-phosphate isomerase A.